Here is a 269-residue protein sequence, read N- to C-terminus: MTNNTRGYIQLHPFHLVGPSPWPMFTSFSLMNLALSLGLTAHGYMNNNMFMLLSTMTVLYSMTLWFKDIMAESTYLGDHTVAVKRGLMQGFLMFVVSEMLMFSSLFWAFLHSALNPTVEMGMSWPPAGMEAISAAELPLLNTMILLASGVTMTYAHHALMNGNRQNTLYGFAYSTLLMVLFVMFQGLEYTYAGFTITDGVYGSTFFALTGLHGLHMMMLIMMLAMCTMRVYNYDFTNTSHVGAETTILYLHVLDVMWLFMYMIVYWWGA.

Transmembrane regions (helical) follow at residues 21–41, 49–69, 90–110, 132–152, 167–187, 205–225, and 247–267; these read PWPM…GLTA, MFML…FKDI, GFLM…WAFL, ISAA…GVTM, TLYG…FQGL, FFAL…MLAM, and ILYL…VYWW.

Belongs to the cytochrome c oxidase subunit 3 family. Component of the cytochrome c oxidase (complex IV, CIV), a multisubunit enzyme composed of a catalytic core of 3 subunits and several supernumerary subunits. The complex exists as a monomer or a dimer and forms supercomplexes (SCs) in the inner mitochondrial membrane with ubiquinol-cytochrome c oxidoreductase (cytochrome b-c1 complex, complex III, CIII).

The protein localises to the mitochondrion inner membrane. It catalyses the reaction 4 Fe(II)-[cytochrome c] + O2 + 8 H(+)(in) = 4 Fe(III)-[cytochrome c] + 2 H2O + 4 H(+)(out). Component of the cytochrome c oxidase, the last enzyme in the mitochondrial electron transport chain which drives oxidative phosphorylation. The respiratory chain contains 3 multisubunit complexes succinate dehydrogenase (complex II, CII), ubiquinol-cytochrome c oxidoreductase (cytochrome b-c1 complex, complex III, CIII) and cytochrome c oxidase (complex IV, CIV), that cooperate to transfer electrons derived from NADH and succinate to molecular oxygen, creating an electrochemical gradient over the inner membrane that drives transmembrane transport and the ATP synthase. Cytochrome c oxidase is the component of the respiratory chain that catalyzes the reduction of oxygen to water. Electrons originating from reduced cytochrome c in the intermembrane space (IMS) are transferred via the dinuclear copper A center (CU(A)) of subunit 2 and heme A of subunit 1 to the active site in subunit 1, a binuclear center (BNC) formed by heme A3 and copper B (CU(B)). The BNC reduces molecular oxygen to 2 water molecules using 4 electrons from cytochrome c in the IMS and 4 protons from the mitochondrial matrix. This Debaryomyces hansenii (strain ATCC 36239 / CBS 767 / BCRC 21394 / JCM 1990 / NBRC 0083 / IGC 2968) (Yeast) protein is Cytochrome c oxidase subunit 3 (COX3).